Here is a 551-residue protein sequence, read N- to C-terminus: Adenine deaminase (551 aa).

It belongs to the metallo-dependent hydrolases superfamily. Adenine deaminase family. Mn(2+) serves as cofactor.

It carries out the reaction adenine + H2O + H(+) = hypoxanthine + NH4(+). This chain is Adenine deaminase, found in Leuconostoc mesenteroides subsp. mesenteroides (strain ATCC 8293 / DSM 20343 / BCRC 11652 / CCM 1803 / JCM 6124 / NCDO 523 / NBRC 100496 / NCIMB 8023 / NCTC 12954 / NRRL B-1118 / 37Y).